Here is a 271-residue protein sequence, read N- to C-terminus: Delta(3,5)-Delta(2,4)-dienoyl-CoA isomerase (271 aa).

Substrate-binding positions include 62-66 (SGGKF) and L120. E152 serves as the catalytic Proton donor/acceptor. A Peroxisome targeting signal (PTS1) motif is present at residues 269–271 (HKL).

This sequence belongs to the enoyl-CoA hydratase/isomerase family. Interacts with ECI1.

The protein resides in the peroxisome. The enzyme catalyses a (3E,5Z)-dienoyl-CoA = a (2E,4E)-(5,6-saturated)-dienoyl-CoA. It participates in lipid metabolism; fatty acid beta-oxidation. Functionally, peroxisomal di-isomerase that is involved in fatty acid metabolism enzyme by converting 3,5-dienoyl-CoAs to the corresponding 2,4-dienoyl-CoAs. Required for ECI1 to be located to the peroxisome. This Saccharomyces cerevisiae (strain ATCC 204508 / S288c) (Baker's yeast) protein is Delta(3,5)-Delta(2,4)-dienoyl-CoA isomerase.